Consider the following 250-residue polypeptide: Triosephosphate isomerase (250 aa).

9 to 11 is a binding site for substrate; it reads NWK. His-95 (electrophile) is an active-site residue. The active-site Proton acceptor is Glu-167. Substrate is bound by residues Gly-173, Ser-212, and 233–234; that span reads GG.

Belongs to the triosephosphate isomerase family. As to quaternary structure, homodimer.

The protein localises to the cytoplasm. It carries out the reaction D-glyceraldehyde 3-phosphate = dihydroxyacetone phosphate. It functions in the pathway carbohydrate biosynthesis; gluconeogenesis. The protein operates within carbohydrate degradation; glycolysis; D-glyceraldehyde 3-phosphate from glycerone phosphate: step 1/1. Its function is as follows. Involved in the gluconeogenesis. Catalyzes stereospecifically the conversion of dihydroxyacetone phosphate (DHAP) to D-glyceraldehyde-3-phosphate (G3P). This is Triosephosphate isomerase from Nitrosococcus oceani (strain ATCC 19707 / BCRC 17464 / JCM 30415 / NCIMB 11848 / C-107).